Reading from the N-terminus, the 305-residue chain is Oligopeptide transport ATP-binding protein OppF (305 aa).

Residues 6–251 (LEIKHLKQHF…PLHPYTKSLL (246 aa)) form the ABC transporter domain. Residue 42 to 49 (GESGCGKS) participates in ATP binding.

It belongs to the ABC transporter superfamily. In terms of assembly, the complex is composed of two ATP-binding proteins (OppD and OppF), two transmembrane proteins (OppB and OppC) and a solute-binding protein (OppA).

It localises to the cell membrane. The enzyme catalyses a [peptide](out) + ATP + H2O = a [peptide](in) + ADP + phosphate + H(+). Functionally, part of the ABC transporter complex OppABCDF involved in the uptake of oligopeptides. Probably responsible for energy coupling to the transport system. Required for genetic competence but not for peptide transport or for sporulation. In Bacillus subtilis (strain 168), this protein is Oligopeptide transport ATP-binding protein OppF.